A 409-amino-acid polypeptide reads, in one-letter code: Na(+)-translocating NADH-quinone reductase subunit F (409 aa).

The chain crosses the membrane as a helical span at residues 5 to 25 (FIFGIIAFTALVLVLAVIILF). The 2Fe-2S ferredoxin-type domain occupies 34 to 128 (GDITISINND…SMDVELPEEI (95 aa)). Residues cysteine 71, cysteine 77, cysteine 80, and cysteine 112 each coordinate [2Fe-2S] cluster. The FAD-binding FR-type domain maps to 131–271 (VKKWECTVIS…SGPFGEFFAK (141 aa)).

The protein belongs to the NqrF family. As to quaternary structure, composed of six subunits; NqrA, NqrB, NqrC, NqrD, NqrE and NqrF. [2Fe-2S] cluster serves as cofactor. The cofactor is FAD.

The protein resides in the cell inner membrane. The enzyme catalyses a ubiquinone + n Na(+)(in) + NADH + H(+) = a ubiquinol + n Na(+)(out) + NAD(+). In terms of biological role, NQR complex catalyzes the reduction of ubiquinone-1 to ubiquinol by two successive reactions, coupled with the transport of Na(+) ions from the cytoplasm to the periplasm. The first step is catalyzed by NqrF, which accepts electrons from NADH and reduces ubiquinone-1 to ubisemiquinone by a one-electron transfer pathway. The protein is Na(+)-translocating NADH-quinone reductase subunit F of Actinobacillus pleuropneumoniae serotype 5b (strain L20).